Reading from the N-terminus, the 284-residue chain is Homeobox protein SIX1 (284 aa).

The homeobox DNA-binding region spans 124–183 (GEETSYCFKEKSRGVLREWYAHNPYPSPREKRELAEATGLTTTQVSNWFKNRRQRDRAAE). The disordered stretch occupies residues 168–271 (VSNWFKNRRQ…AHQHQLQDSL (104 aa)). Residues 179-190 (DRAAEAKERENT) show a composition bias toward basic and acidic residues. The segment covering 242–271 (RSSNYSLPGLTASQPSHGLQAHQHQLQDSL) has biased composition (polar residues).

It belongs to the SIX/Sine oculis homeobox family. Interacts with DACH1. Interacts with EYA1. Interacts with EYA2. Interacts with CDH1. Interacts with TBX18. Interacts with CEBPA. Interacts with CEBPB. Interacts with EBF2. Post-translationally, phosphorylated during interphase; becomes hyperphosphorylated during mitosis. Hyperphosphorylation impairs binding to promoter elements. Ubiquitinated by the anaphase promoting complex (APC), leading to its proteasomal degradation.

It is found in the nucleus. The protein resides in the cytoplasm. Its function is as follows. Transcription factor that is involved in the regulation of cell proliferation, apoptosis and embryonic development. Plays an important role in the development of several organs, including kidney, muscle and inner ear. Depending on context, functions as a transcriptional repressor or activator. Lacks an activation domain, and requires interaction with EYA family members for transcription activation. Mediates nuclear translocation of EYA1 and EYA2. Binds the 5'-TCA[AG][AG]TTNC-3' motif present in the MEF3 element in the MYOG promoter and CIDEA enhancer. Regulates the expression of numerous genes, including MYC, CCNA1, CCND1 and EZR. Acts as an activator of the IGFBP5 promoter, probably coactivated by EYA2. Repression of precursor cell proliferation in myoblasts is switched to activation through recruitment of EYA3 to the SIX1-DACH1 complex. During myogenesis, seems to act together with EYA2 and DACH2. Regulates the expression of CCNA1. Promotes brown adipocyte differentiation. In Lagothrix lagotricha (Brown woolly monkey), this protein is Homeobox protein SIX1 (SIX1).